The chain runs to 117 residues: Large ribosomal subunit protein bL20 (117 aa).

Belongs to the bacterial ribosomal protein bL20 family.

Its function is as follows. Binds directly to 23S ribosomal RNA and is necessary for the in vitro assembly process of the 50S ribosomal subunit. It is not involved in the protein synthesizing functions of that subunit. The chain is Large ribosomal subunit protein bL20 from Idiomarina loihiensis (strain ATCC BAA-735 / DSM 15497 / L2-TR).